We begin with the raw amino-acid sequence, 204 residues long: Probable nicotinate-nucleotide adenylyltransferase (204 aa).

The protein belongs to the NadD family.

It carries out the reaction nicotinate beta-D-ribonucleotide + ATP + H(+) = deamido-NAD(+) + diphosphate. It participates in cofactor biosynthesis; NAD(+) biosynthesis; deamido-NAD(+) from nicotinate D-ribonucleotide: step 1/1. In terms of biological role, catalyzes the reversible adenylation of nicotinate mononucleotide (NaMN) to nicotinic acid adenine dinucleotide (NaAD). In Methylacidiphilum infernorum (isolate V4) (Methylokorus infernorum (strain V4)), this protein is Probable nicotinate-nucleotide adenylyltransferase.